We begin with the raw amino-acid sequence, 397 residues long: Tryptophan synthase beta chain (397 aa).

K91 carries the post-translational modification N6-(pyridoxal phosphate)lysine.

Belongs to the TrpB family. As to quaternary structure, tetramer of two alpha and two beta chains. Pyridoxal 5'-phosphate serves as cofactor.

It catalyses the reaction (1S,2R)-1-C-(indol-3-yl)glycerol 3-phosphate + L-serine = D-glyceraldehyde 3-phosphate + L-tryptophan + H2O. Its pathway is amino-acid biosynthesis; L-tryptophan biosynthesis; L-tryptophan from chorismate: step 5/5. The beta subunit is responsible for the synthesis of L-tryptophan from indole and L-serine. The polypeptide is Tryptophan synthase beta chain (Bacillus anthracis (strain A0248)).